A 683-amino-acid polypeptide reads, in one-letter code: Protein distal antenna (683 aa).

The HTH psq-type domain maps to 7 to 58; that stretch reads TKGKRPLRSLTPRDKIHAIQRIHDGESKASVARDIGVPESTLRGWCKNEDKL. Residues 34-54 constitute a DNA-binding region (H-T-H motif); sequence KASVARDIGVPESTLRGWCKN. 5 disordered regions span residues 220-255, 336-369, 443-525, 572-597, and 652-683; these read TANNLRNSKPSVQPPLQVQSPRSDSGDRTPGLSVKN, SPPIRSSTPQHIIQHAQTPPLPSAPLTPSSTPSG, SETP…SDCI, NQHSNNNDISASNNNNNNSNKTDEEE, and EPQVTEKPNKDLLENEENTEEDSCRNKIRRRK. Low complexity predominate over residues 227 to 242; it reads SKPSVQPPLQVQSPRS. Polar residues-rich tracts occupy residues 338 to 352 and 445 to 460; these read PIRSSTPQHIIQHAQ and TPSVRSLSSNEHNQLD. The segment covering 462 to 478 has biased composition (acidic residues); it reads IEGDEVTDPDLDAEIEG. Positions 575 to 591 are enriched in low complexity; sequence SNNNDISASNNNNNNSN.

As to quaternary structure, homomers. Interacts with itself, danr, ey and dac to form a complex (or complexes) containing the RD factors.

The protein localises to the nucleus. Its function is as follows. Probable transcription factor with a role in the retinal determination (RD) network. Regulates ato expression and is required for normal R8 induction and differentiation. Danr appears to repress Dan expression, but Dan is required for Danr expression anterior to the morphogenetic furrow (MF). Dan and Danr lie downstream of so and require dac function for highest levels of expression. Contributes to differentiation of antenna-specific characteristics; effector gene that acts downstream of homothorax (hth), Distal-less (Dll), cut (ct) and spineless (ss) genes to control differentiation of distal antennal structures. In Drosophila pseudoobscura pseudoobscura (Fruit fly), this protein is Protein distal antenna.